Here is a 198-residue protein sequence, read N- to C-terminus: Nucleoid occlusion factor SlmA (198 aa).

The region spanning 10 to 70 (NRREEILQSL…SLIEFIEDSL (61 aa)) is the HTH tetR-type domain. A DNA-binding region (H-T-H motif) is located at residues 33–52 (TTAKLAASVGVSEAALYRHF). Positions 117 to 144 (EQDRLQGRINQLFERIEAQLRQVLREKR) form a coiled coil.

The protein belongs to the nucleoid occlusion factor SlmA family. Homodimer. Interacts with FtsZ.

The protein localises to the cytoplasm. It localises to the nucleoid. In terms of biological role, required for nucleoid occlusion (NO) phenomenon, which prevents Z-ring formation and cell division over the nucleoid. Acts as a DNA-associated cell division inhibitor that binds simultaneously chromosomal DNA and FtsZ, and disrupts the assembly of FtsZ polymers. SlmA-DNA-binding sequences (SBS) are dispersed on non-Ter regions of the chromosome, preventing FtsZ polymerization at these regions. This Salmonella paratyphi A (strain ATCC 9150 / SARB42) protein is Nucleoid occlusion factor SlmA.